The sequence spans 110 residues: MTGLVGGGLMIIAGILIKLFPPKSINSVYGYRTRRSMSDQRLWNEANRYSASLMILSGLVIAGMGLLLGSNLFILQLILLIAACVITFMLTEKRLKIMTHSQGGDRSGRS.

The next 3 helical transmembrane spans lie at 4 to 26 (LVGG…KSIN), 46 to 68 (ANRY…GLLL), and 72 to 91 (LFIL…FMLT).

It is found in the cell membrane. This is an uncharacterized protein from Bacillus subtilis (strain 168).